The primary structure comprises 559 residues: CRISPR-associated exonuclease Cas4/endonuclease Cas1 fusion (559 aa).

Positions 1–198 (MAETDGSIPL…RCSLVGICLP (198 aa)) are CRISPR-associated exonuclease Cas4. Cys-22 is a [4Fe-4S] cluster binding site. Residues Asp-87 and Asp-100 each coordinate Mn(2+). Cys-187, Cys-190, and Cys-196 together coordinate [4Fe-4S] cluster. The segment at 224 to 559 (LYVQSPKAYV…IPAYPNFVTR (336 aa)) is CRISPR-associated endonuclease Cas1. Residues Glu-380, His-451, and Glu-466 each contribute to the Mn(2+) site.

In the N-terminal section; belongs to the CRISPR-associated exonuclease Cas4 family. The protein in the C-terminal section; belongs to the CRISPR-associated endonuclease Cas1 family. In terms of assembly, homodimer, forms a heterotetramer with a Cas2 homodimer. It depends on [4Fe-4S] cluster as a cofactor. Mg(2+) is required as a cofactor. Requires Mn(2+) as cofactor.

It catalyses the reaction exonucleolytic cleavage in the 5'- to 3'-direction to yield nucleoside 3'-phosphates.. Its function is as follows. CRISPR (clustered regularly interspaced short palindromic repeat), is an adaptive immune system that provides protection against mobile genetic elements (viruses, transposable elements and conjugative plasmids). CRISPR clusters contain spacers, sequences complementary to antecedent mobile elements, and target invading nucleic acids. CRISPR clusters are transcribed and processed into CRISPR RNA (crRNA). The Cas4 region acts as a ssDNA exonuclease, while the Cas1 region acts as a dsDNA endonuclease. Involved in the integration of spacer DNA into the CRISPR cassette. The chain is CRISPR-associated exonuclease Cas4/endonuclease Cas1 fusion (cas4-cas1) from Geobacter sulfurreducens (strain ATCC 51573 / DSM 12127 / PCA).